The primary structure comprises 280 residues: Myb family transcription factor PHL11 (280 aa).

One can recognise an HTH myb-type domain in the interval 20–80 (RDPKPRLRWT…HLQKYRLGQQ (61 aa)). Residues 51–76 (PKSVLKLMGLKGLTLYHLKSHLQKYR) constitute a DNA-binding region (H-T-H motif). The tract at residues 77 to 98 (LGQQQGKKQNRTEQNKENAGSS) is disordered. Residues 129-149 (AEAMRHQVDAQQRFQEQLEVQ) form a coiled coil region. Positions 142 to 147 (FQEQLE) match the LHEQLE motif.

It belongs to the MYB-CC family.

Its subcellular location is the nucleus. This is Myb family transcription factor PHL11 from Arabidopsis thaliana (Mouse-ear cress).